We begin with the raw amino-acid sequence, 310 residues long: Serine protease 30 (310 aa).

Positions 1-21 (MESRARCIFLLLLQILTRARG) are cleaved as a signal peptide. A propeptide spans 22 to 36 (DILPSVCGHSRDAGK) (activation peptide). Residues 37 to 277 (IVGGQDALEG…YVDWIQRILA (241 aa)) enclose the Peptidase S1 domain. The cysteines at positions 63 and 79 are disulfide-linked. Active-site charge relay system residues include histidine 78 and aspartate 128. Intrachain disulfides connect cysteine 161–cysteine 235, cysteine 191–cysteine 214, and cysteine 225–cysteine 253. Catalysis depends on serine 229, which acts as the Charge relay system. N-linked (GlcNAc...) asparagine glycosylation is found at asparagine 238 and asparagine 279. Serine 281 carries the GPI-anchor amidated serine lipid modification. Positions 282–310 (DAYGYHSSASAAYQMLLPVLLAVALPGSL) are cleaved as a propeptide — removed in mature form.

It belongs to the peptidase S1 family. As to expression, expressed primarily in distal gut.

Its subcellular location is the cell membrane. Inhibited by aprotinin, leupeptin, benzamidine and soybean trypsin inhibitor. Partially inhibited by PMSF and DFP. In terms of biological role, selectively cleaves synthetic peptide substrates of trypsin. Activates the epithelial sodium channel ENaC. This is Serine protease 30 (Prss30) from Mus musculus (Mouse).